The sequence spans 95 residues: Co-chaperonin GroES (95 aa).

It belongs to the GroES chaperonin family. As to quaternary structure, heptamer of 7 subunits arranged in a ring. Interacts with the chaperonin GroEL.

The protein localises to the cytoplasm. In terms of biological role, together with the chaperonin GroEL, plays an essential role in assisting protein folding. The GroEL-GroES system forms a nano-cage that allows encapsulation of the non-native substrate proteins and provides a physical environment optimized to promote and accelerate protein folding. GroES binds to the apical surface of the GroEL ring, thereby capping the opening of the GroEL channel. This chain is Co-chaperonin GroES, found in Chlorobaculum tepidum (strain ATCC 49652 / DSM 12025 / NBRC 103806 / TLS) (Chlorobium tepidum).